The chain runs to 117 residues: Minor capsid protein VP2 (117 aa).

Belongs to the lagovirus VP2 protein family. In terms of assembly, homooligomer. The portal-like structure consists in 12 copies of VP2. Interacts with capsid protein VP1.

It is found in the virion. It localises to the host cytoplasm. In terms of biological role, minor structural protein that forms a portal-like structure at a unique three-fold axis of symmetry, following binding to the host receptor. The channel formed by VP2 may allow the delivery of the viral genome through the host endosomal membrane. This Oryctolagus cuniculus (Rabbit) protein is Minor capsid protein VP2.